An 88-amino-acid chain; its full sequence is Small ribosomal subunit protein bS20 (88 aa).

Positions 1 to 27 (MANSKSAKKRALQSEKRRQHNASRRSM) are disordered.

Belongs to the bacterial ribosomal protein bS20 family.

Binds directly to 16S ribosomal RNA. The polypeptide is Small ribosomal subunit protein bS20 (Shewanella sediminis (strain HAW-EB3)).